Consider the following 149-residue polypeptide: Oligosaccharyltransferase complex subunit ostc (149 aa).

Residues 1 to 32 (METLFSLPFTVLECPNVKLKKPSWLHMPSAMT) are Cytoplasmic-facing. A helical transmembrane segment spans residues 33–53 (VYAVVIVSYFLITGGIIYDVI). Residues 54–83 (VEPPSVGSMTDEHGHQRPVAFLAYRVNGQY) lie on the Extracellular side of the membrane. A helical transmembrane segment spans residues 84–104 (IMEGLASSFLFTMGGLGFIIL). Topologically, residues 105 to 117 (DRSNAPNIPKLNR) are cytoplasmic. Residues 118–138 (FLLLFIGFVSVLLSFFMARVF) traverse the membrane as a helical segment. Over 139–149 (MRMKLPGYLMG) the chain is Extracellular.

It belongs to the OSTC family. In terms of assembly, specific component of the STT3A-containing form of the oligosaccharyltransferase (OST) complex.

It is found in the membrane. Its pathway is protein modification; protein glycosylation. In terms of biological role, specific component of the STT3A-containing form of the oligosaccharyl transferase (OST) complex that catalyzes the initial transfer of a defined glycan (Glc(3)Man(9)GlcNAc(2) in eukaryotes) from the lipid carrier dolichol-pyrophosphate to an asparagine residue within an Asn-X-Ser/Thr consensus motif in nascent polypeptide chains, the first step in protein N-glycosylation. N-glycosylation occurs cotranslationally and the complex associates with the Sec61 complex at the channel-forming translocon complex that mediates protein translocation across the endoplasmic reticulum (ER). All subunits are required for a maximal enzyme activity. The chain is Oligosaccharyltransferase complex subunit ostc from Danio rerio (Zebrafish).